A 549-amino-acid polypeptide reads, in one-letter code: Copalyl diphosphate synthase (549 aa).

Positions 321-326 (DADDTA) match the DXDDTA motif motif. Residues 451-457 (QRDDGSW) carry the QXXDGSW motif motif.

Belongs to the terpene synthase family. It depends on Mg(2+) as a cofactor.

It catalyses the reaction (2E,6E,10E)-geranylgeranyl diphosphate = (+)-copalyl diphosphate. In terms of biological role, involved in the biosynthesis of the labdane-type bicyclic diterpene labda-8(17),12(E),14-triene. Catalyzes the conversion of geranylgeranyl diphosphate (GGDP) into (+)-copalyl diphosphate. This is Copalyl diphosphate synthase from Streptomyces anulatus (Streptomyces chrysomallus).